The sequence spans 349 residues: tRNA pseudouridine synthase D (349 aa).

Phe27 provides a ligand contact to substrate. Asp80 acts as the Nucleophile in catalysis. Residue Asn129 participates in substrate binding. The TRUD domain occupies 155 to 303 (GVPNYFGAQR…VEAARRAMLL (149 aa)). Position 329 (Phe329) interacts with substrate.

It belongs to the pseudouridine synthase TruD family.

It catalyses the reaction uridine(13) in tRNA = pseudouridine(13) in tRNA. Responsible for synthesis of pseudouridine from uracil-13 in transfer RNAs. This Klebsiella pneumoniae subsp. pneumoniae (strain ATCC 700721 / MGH 78578) protein is tRNA pseudouridine synthase D.